Consider the following 359-residue polypeptide: tRNA-specific 2-thiouridylase MnmA (359 aa).

ATP contacts are provided by residues 6–13 and leucine 32; that span reads AMSGGVDS. Cysteine 101 acts as the Nucleophile in catalysis. Cysteine 101 and cysteine 193 are oxidised to a cystine. Glycine 125 serves as a coordination point for ATP. An interaction with tRNA region spans residues 143–145; that stretch reads KDQ. Cysteine 193 (cysteine persulfide intermediate) is an active-site residue.

It belongs to the MnmA/TRMU family.

Its subcellular location is the cytoplasm. It carries out the reaction S-sulfanyl-L-cysteinyl-[protein] + uridine(34) in tRNA + AH2 + ATP = 2-thiouridine(34) in tRNA + L-cysteinyl-[protein] + A + AMP + diphosphate + H(+). Functionally, catalyzes the 2-thiolation of uridine at the wobble position (U34) of tRNA, leading to the formation of s(2)U34. This is tRNA-specific 2-thiouridylase MnmA from Mycobacterium sp. (strain KMS).